A 781-amino-acid polypeptide reads, in one-letter code: Mitochondrial inner membrane m-AAA protease component paraplegin (781 aa).

The transit peptide at 1-43 directs the protein to the mitochondrion; sequence MAAALLLLRALRQSPEPGPWRLWAQLSGRSPGLFSGAGGRRPY. Positions 44–105 are cleaved as a propeptide — removed in mature form; it reads VVRGTPIGLA…GSTLYFNTSG (62 aa). The tract at residues 105-134 is disordered; that stretch reads GLKQKNKDDDKPKGKAPEDDEEERRRKERE. The Mitochondrial matrix segment spans residues 106–144; it reads LKQKNKDDDKPKGKAPEDDEEERRRKEREDQMYRERLRT. Residues 109 to 134 show a composition bias toward basic and acidic residues; sequence KNKDDDKPKGKAPEDDEEERRRKERE. A helical membrane pass occupies residues 145 to 165; it reads LFIIAIVMSLLNSLSTSGGSI. Residues 166-248 are Mitochondrial intermembrane-facing; the sequence is SWADFVNEML…DRIPVSYKRT (83 aa). The chain crosses the membrane as a helical span at residues 249-269; it reads GFFGNALYALGMTAVGLAILW. At 270-781 the chain is on the mitochondrial matrix side; the sequence is YVFRLAGMTG…ASGEEEAPAP (512 aa). ATP contacts are provided by Ala312, Gly352, Cys353, Gly354, Lys355, Thr356, and Leu357. Residue Tyr505 is modified to 3'-nitrotyrosine. His574 is a binding site for Zn(2+). Glu575 is an active-site residue. Zn(2+)-binding residues include His578 and Asp650. The interval 701–781 is interaction with PPIF; that stretch reads HEARLLVARA…ASGEEEAPAP (81 aa).

In the N-terminal section; belongs to the AAA ATPase family. The protein in the C-terminal section; belongs to the peptidase M41 family. Forms heterooligomers with AFG3L2; the m-AAA protease is composed of heterohexamers of AFG3L2 and SPG7. Component of the mitochondrial permeability transition pore complex (mPTPC), at least composed of SPG7, VDAC1 and PPIF. Interacts with MAIP1. The cofactor is Zn(2+). Upon import into the mitochondrion, the N-terminal transit peptide is cleaved by the mitochondrial-processing peptidase (MPP) to generate an intermediate form which undergoes a second proteolytic cleavage mediated by proteases AFG3L2 removing an additional N-terminal fragment to generate the proteolytically active mature form.

The protein localises to the mitochondrion inner membrane. It carries out the reaction ATP + H2O = ADP + phosphate + H(+). Catalytic component of the m-AAA protease, a protease that plays a key role in proteostasis of inner mitochondrial membrane proteins, and which is essential for axonal and neuron development. SPG7 possesses both ATPase and protease activities: the ATPase activity is required to unfold substrates, threading them into the internal proteolytic cavity for hydrolysis into small peptide fragments. The m-AAA protease exerts a dual role in the mitochondrial inner membrane: it mediates the processing of specific regulatory proteins and ensures protein quality control by degrading misfolded polypeptides. Mediates protein maturation of the mitochondrial ribosomal subunit MRPL32/bL32m by catalyzing the cleavage of the presequence of MRPL32/bL32m prior to assembly into the mitochondrial ribosome. Acts as a regulator of calcium in neurons by mediating degradation of SMDT1/EMRE before its assembly with the uniporter complex, limiting the availability of SMDT1/EMRE for MCU assembly and promoting efficient assembly of gatekeeper subunits with MCU. Also regulates mitochondrial calcium by catalyzing degradation of MCU. Plays a role in the formation and regulation of the mitochondrial permeability transition pore (mPTP) and its proteolytic activity is dispensable for this function. The sequence is that of Mitochondrial inner membrane m-AAA protease component paraplegin (Spg7) from Rattus norvegicus (Rat).